We begin with the raw amino-acid sequence, 248 residues long: TPR repeat-containing protein slr0751 (248 aa).

4 TPR repeats span residues 61–94 (PEAI…SPDS), 95–128 (PETH…DRYY), 129–162 (IPPY…DPNR), and 163–196 (YKAY…RPDY).

This Synechocystis sp. (strain ATCC 27184 / PCC 6803 / Kazusa) protein is TPR repeat-containing protein slr0751.